Here is a 192-residue protein sequence, read N- to C-terminus: dTTP/UTP pyrophosphatase (192 aa).

The active-site Proton acceptor is the Asp70.

This sequence belongs to the Maf family. YhdE subfamily. A divalent metal cation serves as cofactor.

The protein resides in the cytoplasm. It carries out the reaction dTTP + H2O = dTMP + diphosphate + H(+). The enzyme catalyses UTP + H2O = UMP + diphosphate + H(+). Functionally, nucleoside triphosphate pyrophosphatase that hydrolyzes dTTP and UTP. May have a dual role in cell division arrest and in preventing the incorporation of modified nucleotides into cellular nucleic acids. The chain is dTTP/UTP pyrophosphatase from Alkaliphilus metalliredigens (strain QYMF).